The primary structure comprises 1242 residues: MFFNPYLSGGVTGGAVAGGRRQRSQPGSAQGSGKRPPQKQFLQIVPRGVMFDGQTGLIKHKTGRLPLMFYREIKHLLSHDMVWPCPWRETLVGRVVGPIRFHTYDQTDAVLFFDSPENVSPRYRQHLVPSGNVLRFFGATEHGYSICVNVFGQRSYFYCEYSDTDRLREVIASVGELVPEPRTPYAVSVTPATKTSIYGYGTRPVPDLQCVSISNWTMARKIGEYLLEQGFPVYEVRVDPLTRLVIDRRITTFGWCSVNRYDWRQQGRASTCDIEVDCDVSDLVAVPDDSSWPRYRCLSFDIECMSGEGGFPCAEKSDDIVIQISCVCYETGGNTAVDQGIPNGNDGRGCTSEGVIFGHSGLHLFTIGTCGQVGPDVDVYEFPSEYELLLGFMLFFQRYAPAFVTGYNINSFDLKYILTRLEYLYKVDSQRFCKLPTAQGGRFFLHSPAVGFKRQYAAAFPSASHNNPASTAATKVYIAGSVVIDMYPVCMAKTNSPNYKLNTMAELYLRQRKDDLSYKDIPRCFVANAEGRAQVGRYCLQDAVLVRDLFNTINFHYEAGAIARLAKIPLRRVIFDGQQIRIYTSLLDECACRDFILPNHYSKGTTVPETNSVAVSPNAAIISTAAVPGDAGSVAAMFQMSPPLQSAPSSQDGVSPGSGSNSSSSVGVFSVGSGSSGGVGVSNDNHGAGGTAAVSYQGATVFEPEVGYYNDPVAVFDFASLYPSIIMAHNLCYSTLLVPGGEYPVDPADVYSVTLENGVTHRFVRASVRVSVLSELLNKWVSQRRAVRECMRECQDPVRRMLLDKEQMALKVTCNAFYGFTGVVNGMMPCLPIAASITRIGRDMLERTARFIKDNFSEPCFLHNFFNQEDYVVGTREGDSEESSTLPEGLETSSGGLNERRVEARVIYGDTDSVFVRFRGLTPQALVARGPSLAHYVTACLFVEPVKLEFEKVFVSLMMICKKRYIGKVEGASGLSMKGVDLVRKTACEFVKGVTRDVLSLLFEDREVSEAAVRLSRLSLDEVKKYGVPRGFWRILRRLVQARDDLYLHRVRVEDLVLSSVLSKDISLYRQSNLPHIAVIKRLAARSEELPSVGDRVFYVLTAPGVRAAPQGSSDNGDSVTTGVVSRSDAIDGTDDDADGGGVEESNRRGGEPAKKRARKPPSAVCNYEVAEDPSYVREHGVPIHADKYFEQVLKAVTNVLSPVFPGGETARKDKFLHMVLPRRLHLEPAFLPYSVKAHECC.

Disordered stretches follow at residues 14–38, 644–665, and 1109–1162; these read GAVAGGRRQRSQPGSAQGSGKRPPQ, LQSAPSSQDGVSPGSGSNSSSS, and APQG…RKPP. Low complexity predominate over residues 653 to 665; that stretch reads GVSPGSGSNSSSS. Over residues 1111-1125 the composition is skewed to polar residues; the sequence is QGSSDNGDSVTTGVV. Positions 1145 to 1155 are enriched in basic and acidic residues; sequence ESNRRGGEPAK.

The protein belongs to the DNA polymerase type-B family. In terms of assembly, forms a complex with the ssDNA-binding protein UL57, the DNA polymerase processivity factor UL44, and the alkaline exonuclease UL98. Interacts with the putative helicase-primase complex composed of UL70, UL102 and UL105 proteins; these interactions may coordinate leading and lagging strand DNA synthesis at the replication fork.

The protein localises to the host nucleus. It carries out the reaction DNA(n) + a 2'-deoxyribonucleoside 5'-triphosphate = DNA(n+1) + diphosphate. In terms of biological role, replicates viral genomic DNA in the late phase of lytic infection, producing long concatemeric DNA. The replication complex is composed of six viral proteins: the DNA polymerase, processivity factor, primase, primase-associated factor, helicase, and ssDNA-binding protein. In Homo sapiens (Human), this protein is DNA polymerase catalytic subunit (UL54).